Reading from the N-terminus, the 1005-residue chain is MMGDHLRPMECLNICLEDNLQPCPEAYPSEIHGHPGPSEPCQEHTCPFDPPESARPDAPHGNSGVESTHLENCLVQVQARQASASLRSLEDNSSLGSPQQNQSSSTQVVFWAGILQAQMCVLDLEEELEKTEGLRAELRCCIPPPSKDLLGDEGLSPSRPEEDEDSGDDSSGPEEENQTWPREKIPGSSLEWGAEEDSIFFDNPLFLESPCSDTSTEGECFSWGYPNSHPDMKTWHQSPQTLDSPLQKGTGLWRQENELDLGSDTADHGGCSTPPFPVPSYKMHPCLALGSTEGDPTVPPDQEGETSCEDDLGHGSPKAPFVDHELIQESDNFEFDLRPATTHPVQPWGSQTSQSLSDLTQPILEDLQREDPSRSQETLISQNRGERDAGCFQEPVFCTLAPWGSQTSLLEPNCPESEGRGSGPQPSPVSSQDSSPRVLLHSPKWPQDASHLLQKDRSELSSLKEEETEEVPSLRQEAECEDTSRSEDASANQHHVHLASAEGLPESPMPQAQSPEEGWRPSSSREKLANDIRNDKGAWNLALRLYQLNGFRKSEVAAHLRKNNDFSRAVAEAYLSFFQFEGQSLDRALRGFLQALVLSGETQERERILYQFSKRFHYCNPGAFPSVDSVHTLTCAIMLLNTDLHGQNIGKSMSCQEFVTNLNGLQDGRNFPKELLKALYWSIRSEKLEWAIDEEDADRPEKDQPSPSAGKISSPFLQMAQDPTMPTYKQGILARKMHHIADGKKTPWGKRGWKMFHTLLRGMVLYFLKGEGQWLDGESLVGHMVDEPVGVHHSLASPATHYTKKPHVFQLRTADWRLYLFQAPTAKEMASWIARINLAAATHSAPPFPAAVGSQRRFVRPILPMSPVQSSLEEQHRSHENCLDAASDDLLDLQRNLPERRGRSRELEEYRLRKEYLEHEKTRYETYVQLLVARLHFPLGDLALWEDQLGKETDGSQEPRPSLKKSHSSPSLHQEEAPTTAKVKRNISERRTYRKIIPKRNRNQL.

The interval 27–66 (YPSEIHGHPGPSEPCQEHTCPFDPPESARPDAPHGNSGVE) is disordered. 3 positions are modified to phosphoserine: S85, S88, and S97. Disordered regions lie at residues 145 to 189 (PSKD…PGSS), 287 to 386 (LALG…NRGE), 407 to 525 (TSLL…SSSR), and 694 to 714 (EEDA…KISS). Positions 161 to 177 (EEDEDSGDDSSGPEEEN) are enriched in acidic residues. Residues 350–361 (SQTSQSLSDLTQ) show a composition bias toward low complexity. Phosphoserine occurs at positions 381 and 435. A compositionally biased stretch (low complexity) spans 428–438 (PVSSQDSSPRV). Basic and acidic residues-rich tracts occupy residues 453–465 (LQKD…SLKE) and 476–488 (QEAE…RSED). The SEC7 domain occupies 493 to 686 (QHHVHLASAE…KALYWSIRSE (194 aa)). The PH domain maps to 726–841 (PTYKQGILAR…WIARINLAAA (116 aa)). Residues 870-926 (SSLEEQHRSHENCLDAASDDLLDLQRNLPERRGRSRELEEYRLRKEYLEHEKTRYET) are a coiled coil. Residues 951–1005 (KETDGSQEPRPSLKKSHSSPSLHQEEAPTTAKVKRNISERRTYRKIIPKRNRNQL) are disordered. S968 and S971 each carry phosphoserine. Over residues 992 to 1005 (TYRKIIPKRNRNQL) the composition is skewed to basic residues.

It localises to the cell membrane. It is found in the cell projection. Its subcellular location is the ruffle membrane. Guanine nucleotide exchange factor for ARF6 and ARL14/ARF7. Through ARL14 activation, controls the movement of MHC class II-containing vesicles along the actin cytoskeleton in dendritic cells. Involved in membrane recycling. Interacts with several phosphatidylinositol phosphate species, including phosphatidylinositol 3,4-bisphosphate, phosphatidylinositol 3,5-bisphosphate and phosphatidylinositol 4,5-bisphosphate. The sequence is that of PH and SEC7 domain-containing protein 4 (Psd4) from Mus musculus (Mouse).